A 306-amino-acid polypeptide reads, in one-letter code: tRNA dimethylallyltransferase 1 (306 aa).

13–20 (GPTASGKT) contacts ATP. Substrate is bound at residue 15-20 (TASGKT). Residues 38–41 (DSRQ) are interaction with substrate tRNA.

Belongs to the IPP transferase family. As to quaternary structure, monomer. Mg(2+) is required as a cofactor.

It catalyses the reaction adenosine(37) in tRNA + dimethylallyl diphosphate = N(6)-dimethylallyladenosine(37) in tRNA + diphosphate. Functionally, catalyzes the transfer of a dimethylallyl group onto the adenine at position 37 in tRNAs that read codons beginning with uridine, leading to the formation of N6-(dimethylallyl)adenosine (i(6)A). This chain is tRNA dimethylallyltransferase 1, found in Azobacteroides pseudotrichonymphae genomovar. CFP2.